A 142-amino-acid chain; its full sequence is Transcriptional regulator MraZ (142 aa).

2 consecutive SpoVT-AbrB domains span residues 5–48 and 77–120; these read EFEY…PLCE and AFDV…DKET.

Belongs to the MraZ family. Forms oligomers.

The protein localises to the cytoplasm. Its subcellular location is the nucleoid. This chain is Transcriptional regulator MraZ, found in Dehalococcoides mccartyi (strain ATCC BAA-2100 / JCM 16839 / KCTC 5957 / BAV1).